The following is a 354-amino-acid chain: Probable L-ascorbate-6-phosphate lactonase UlaG (354 aa).

Belongs to the UlaG family. The cofactor is a divalent metal cation.

It is found in the cytoplasm. It catalyses the reaction L-ascorbate 6-phosphate + H2O = 3-dehydro-L-gulonate 6-phosphate. It participates in cofactor degradation; L-ascorbate degradation; D-xylulose 5-phosphate from L-ascorbate: step 1/4. In terms of biological role, probably catalyzes the hydrolysis of L-ascorbate-6-P into 3-keto-L-gulonate-6-P. Is essential for L-ascorbate utilization under anaerobic conditions. The chain is Probable L-ascorbate-6-phosphate lactonase UlaG from Shigella boydii serotype 18 (strain CDC 3083-94 / BS512).